The primary structure comprises 148 residues: Putative nickel-responsive regulator (148 aa).

Histidine 88, histidine 99, histidine 101, and cysteine 107 together coordinate Ni(2+).

Belongs to the transcriptional regulatory CopG/NikR family. As to quaternary structure, homotetramer. Ni(2+) is required as a cofactor.

Transcriptional regulator. The sequence is that of Putative nickel-responsive regulator from Helicobacter pylori (strain J99 / ATCC 700824) (Campylobacter pylori J99).